Reading from the N-terminus, the 485-residue chain is Ataxin-10 (485 aa).

This sequence belongs to the ataxin-10 family.

The protein localises to the cytoplasm. The protein resides in the perinuclear region. It localises to the midbody. Functionally, may play a role in the regulation of cytokinesis. May play a role in signaling by stimulating protein glycosylation. Induces neuritogenesis by activating the Ras-MAP kinase pathway and is necessary for the survival of cerebellar neurons. Does not appear to play a major role in ciliogenesis. This is Ataxin-10 (atxn10) from Xenopus tropicalis (Western clawed frog).